A 525-amino-acid polypeptide reads, in one-letter code: GMP synthase [glutamine-hydrolyzing] (525 aa).

Positions 8–207 (KILILDFGSQ…AVAICGCGTN (200 aa)) constitute a Glutamine amidotransferase type-1 domain. The active-site Nucleophile is cysteine 85. Active-site residues include histidine 181 and glutamate 183. The 193-residue stretch at 208–400 (WKPSSIIEDA…LGLPYNMLYR (193 aa)) folds into the GMPS ATP-PPase domain. 235 to 241 (SGGVDSS) is a binding site for ATP.

Homodimer.

It carries out the reaction XMP + L-glutamine + ATP + H2O = GMP + L-glutamate + AMP + diphosphate + 2 H(+). Its pathway is purine metabolism; GMP biosynthesis; GMP from XMP (L-Gln route): step 1/1. Catalyzes the synthesis of GMP from XMP. This Shewanella denitrificans (strain OS217 / ATCC BAA-1090 / DSM 15013) protein is GMP synthase [glutamine-hydrolyzing].